The primary structure comprises 466 residues: Ribulose bisphosphate carboxylase large chain (466 aa).

Lysine 5 carries the N6,N6,N6-trimethyllysine modification. Positions 114 and 164 each coordinate substrate. The active-site Proton acceptor is the lysine 166. Lysine 168 provides a ligand contact to substrate. Residues lysine 192, aspartate 194, and glutamate 195 each contribute to the Mg(2+) site. Lysine 192 carries the N6-carboxylysine modification. Histidine 285 (proton acceptor) is an active-site residue. 3 residues coordinate substrate: arginine 286, histidine 318, and serine 370.

It belongs to the RuBisCO large chain family. Type I subfamily. Heterohexadecamer of 8 large chains and 8 small chains. Requires Mg(2+) as cofactor.

Its subcellular location is the plastid. The protein localises to the chloroplast. The catalysed reaction is 2 (2R)-3-phosphoglycerate + 2 H(+) = D-ribulose 1,5-bisphosphate + CO2 + H2O. It carries out the reaction D-ribulose 1,5-bisphosphate + O2 = 2-phosphoglycolate + (2R)-3-phosphoglycerate + 2 H(+). RuBisCO catalyzes two reactions: the carboxylation of D-ribulose 1,5-bisphosphate, the primary event in carbon dioxide fixation, as well as the oxidative fragmentation of the pentose substrate in the photorespiration process. Both reactions occur simultaneously and in competition at the same active site. The polypeptide is Ribulose bisphosphate carboxylase large chain (Cornus kousa (Kousa dogwood)).